A 219-amino-acid chain; its full sequence is 7-cyano-7-deazaguanine synthase (219 aa).

Position 9 to 19 (9 to 19 (YSGGMDSFTVL)) interacts with ATP. Residues Cys185, Cys193, Cys196, and Cys199 each coordinate Zn(2+).

It belongs to the QueC family. Zn(2+) serves as cofactor.

It carries out the reaction 7-carboxy-7-deazaguanine + NH4(+) + ATP = 7-cyano-7-deazaguanine + ADP + phosphate + H2O + H(+). Its pathway is purine metabolism; 7-cyano-7-deazaguanine biosynthesis. Its function is as follows. Catalyzes the ATP-dependent conversion of 7-carboxy-7-deazaguanine (CDG) to 7-cyano-7-deazaguanine (preQ(0)). The polypeptide is 7-cyano-7-deazaguanine synthase (Marinomonas sp. (strain MWYL1)).